Consider the following 415-residue polypeptide: uncharacterized protein (415 aa).

3 disordered regions span residues phenylalanine 39–histidine 77, alanine 220–threonine 247, and valine 346–lysine 415. 3 stretches are compositionally biased toward basic and acidic residues: residues alanine 220–asparagine 238, aspartate 365–methionine 380, and serine 400–lysine 415.

This is an uncharacterized protein from Rattus norvegicus (Rat).